A 390-amino-acid polypeptide reads, in one-letter code: F-box/kelch-repeat protein At4g39753 (390 aa).

Low complexity predominate over residues 1–16; sequence MVTFWAETAASAATTS. The interval 1–33 is disordered; that stretch reads MVTFWAETAASAATTSKGEPPSKKRKTNPSPPP. An F-box domain is found at 32 to 79; that stretch reads PPSLLSLPDVLILNCLSRIPKSYYPKLSIVSKTFRDLIISIDLNHARF. 4 Kelch repeats span residues 139–192, 193–243, 245–286, and 288–321; these read PLLV…VFDR, KIYV…MIQG, FYVR…WYSC, and PNSF…LIET.

The protein is F-box/kelch-repeat protein At4g39753 of Arabidopsis thaliana (Mouse-ear cress).